The primary structure comprises 201 residues: Pyrrolidone-carboxylate peptidase (201 aa).

Catalysis depends on residues glutamate 81, cysteine 143, and histidine 168.

It belongs to the peptidase C15 family. As to quaternary structure, homotetramer.

The protein resides in the cytoplasm. It catalyses the reaction Release of an N-terminal pyroglutamyl group from a polypeptide, the second amino acid generally not being Pro.. Functionally, removes 5-oxoproline from various penultimate amino acid residues except L-proline. The sequence is that of Pyrrolidone-carboxylate peptidase (pcp) from Halalkalibacterium halodurans (strain ATCC BAA-125 / DSM 18197 / FERM 7344 / JCM 9153 / C-125) (Bacillus halodurans).